Reading from the N-terminus, the 160-residue chain is SsrA-binding protein (160 aa).

It belongs to the SmpB family.

The protein localises to the cytoplasm. Functionally, required for rescue of stalled ribosomes mediated by trans-translation. Binds to transfer-messenger RNA (tmRNA), required for stable association of tmRNA with ribosomes. tmRNA and SmpB together mimic tRNA shape, replacing the anticodon stem-loop with SmpB. tmRNA is encoded by the ssrA gene; the 2 termini fold to resemble tRNA(Ala) and it encodes a 'tag peptide', a short internal open reading frame. During trans-translation Ala-aminoacylated tmRNA acts like a tRNA, entering the A-site of stalled ribosomes, displacing the stalled mRNA. The ribosome then switches to translate the ORF on the tmRNA; the nascent peptide is terminated with the 'tag peptide' encoded by the tmRNA and targeted for degradation. The ribosome is freed to recommence translation, which seems to be the essential function of trans-translation. This Escherichia coli O6:K15:H31 (strain 536 / UPEC) protein is SsrA-binding protein.